We begin with the raw amino-acid sequence, 213 residues long: ATP phosphoribosyltransferase (213 aa).

It belongs to the ATP phosphoribosyltransferase family. Short subfamily. As to quaternary structure, heteromultimer composed of HisG and HisZ subunits.

The protein resides in the cytoplasm. It catalyses the reaction 1-(5-phospho-beta-D-ribosyl)-ATP + diphosphate = 5-phospho-alpha-D-ribose 1-diphosphate + ATP. It participates in amino-acid biosynthesis; L-histidine biosynthesis; L-histidine from 5-phospho-alpha-D-ribose 1-diphosphate: step 1/9. Its function is as follows. Catalyzes the condensation of ATP and 5-phosphoribose 1-diphosphate to form N'-(5'-phosphoribosyl)-ATP (PR-ATP). Has a crucial role in the pathway because the rate of histidine biosynthesis seems to be controlled primarily by regulation of HisG enzymatic activity. This Shouchella clausii (strain KSM-K16) (Alkalihalobacillus clausii) protein is ATP phosphoribosyltransferase.